Reading from the N-terminus, the 111-residue chain is Cytochrome c (111 aa).

At alanine 1 the chain carries N-acetylalanine. Positions 22, 25, and 26 each coordinate heme c. Lysine 80 bears the N6,N6,N6-trimethyllysine mark. Methionine 88 is a heme c binding site. N6,N6,N6-trimethyllysine is present on lysine 94.

The protein belongs to the cytochrome c family. Binds 1 heme c group covalently per subunit.

Its subcellular location is the mitochondrion intermembrane space. Functionally, electron carrier protein. The oxidized form of the cytochrome c heme group can accept an electron from the heme group of the cytochrome c1 subunit of cytochrome reductase. Cytochrome c then transfers this electron to the cytochrome oxidase complex, the final protein carrier in the mitochondrial electron-transport chain. This is Cytochrome c from Cannabis sativa (Hemp).